Here is a 448-residue protein sequence, read N- to C-terminus: Glucose-6-phosphate isomerase (448 aa).

E290 acts as the Proton donor in catalysis. Catalysis depends on residues H311 and K425.

It belongs to the GPI family.

It is found in the cytoplasm. It catalyses the reaction alpha-D-glucose 6-phosphate = beta-D-fructose 6-phosphate. The protein operates within carbohydrate biosynthesis; gluconeogenesis. Its pathway is carbohydrate degradation; glycolysis; D-glyceraldehyde 3-phosphate and glycerone phosphate from D-glucose: step 2/4. Its function is as follows. Catalyzes the reversible isomerization of glucose-6-phosphate to fructose-6-phosphate. In Oceanobacillus iheyensis (strain DSM 14371 / CIP 107618 / JCM 11309 / KCTC 3954 / HTE831), this protein is Glucose-6-phosphate isomerase.